Here is a 405-residue protein sequence, read N- to C-terminus: mRNA cap guanine-N(7) methyltransferase (405 aa).

The segment at 1–78 (MDNILNPEDN…PRLEEGHGSL (78 aa)) is disordered. Polar residues-rich tracts occupy residues 9-18 (DNVSQTNTET) and 36-45 (KFTASGQNLD). The segment covering 58-75 (KAGEPESPSKRPRLEEGH) has biased composition (basic and acidic residues). Positions 97 to 404 (SRIFHLRNFN…IYLLFAFEKQ (308 aa)) constitute an mRNA cap 0 methyltransferase domain. An mRNA-binding site is contributed by 106–107 (NN). S-adenosyl-L-methionine contacts are provided by Lys-110, Gly-134, Asp-156, Asp-190, Gln-213, and Tyr-218.

It belongs to the class I-like SAM-binding methyltransferase superfamily. mRNA cap 0 methyltransferase family.

It localises to the nucleus. The catalysed reaction is a 5'-end (5'-triphosphoguanosine)-ribonucleoside in mRNA + S-adenosyl-L-methionine = a 5'-end (N(7)-methyl 5'-triphosphoguanosine)-ribonucleoside in mRNA + S-adenosyl-L-homocysteine. In terms of biological role, catalytic subunit of the mRNA-capping methyltransferase RNMT:RAMAC complex that methylates the N7 position of the added guanosine to the 5'-cap structure of mRNAs. Binds RNA containing 5'-terminal GpppC. The protein is mRNA cap guanine-N(7) methyltransferase (rnmt) of Xenopus tropicalis (Western clawed frog).